Consider the following 379-residue polypeptide: Putative nickel insertion protein (379 aa).

The protein belongs to the LarC family.

The protein is Putative nickel insertion protein of Methanocaldococcus jannaschii (strain ATCC 43067 / DSM 2661 / JAL-1 / JCM 10045 / NBRC 100440) (Methanococcus jannaschii).